The following is a 61-amino-acid chain: Beta-insect depressant toxin BotIT5 (61 aa).

The LCN-type CS-alpha/beta domain occupies aspartate 1–glycine 61. 4 disulfides stabilise this stretch: cysteine 10–cysteine 60, cysteine 14–cysteine 35, cysteine 21–cysteine 42, and cysteine 25–cysteine 44. A Glycine amide modification is found at glycine 61.

Belongs to the long (4 C-C) scorpion toxin superfamily. Sodium channel inhibitor family. Beta subfamily. Expressed by the venom gland.

The protein resides in the secreted. Functionally, depressant insect beta-toxins cause a transient contraction paralysis followed by a slow flaccid paralysis. They bind voltage-independently at site-4 of sodium channels (Nav) and shift the voltage of activation toward more negative potentials thereby affecting sodium channel activation and promoting spontaneous and repetitive firing. This toxin is active only on insects. The chain is Beta-insect depressant toxin BotIT5 from Buthus occitanus tunetanus (Common European scorpion).